A 543-amino-acid chain; its full sequence is Protein lin-9 homolog (543 aa).

Positions 21–82 (REGSLSNTLN…SRSPRRSQRV (62 aa)) are disordered. The span at 24–55 (SLSNTLNEKNNLPKSQTTRGRSSYVSMETPTR) shows a compositional bias: polar residues. A coiled-coil region spans residues 355-451 (IKKEHIKHLK…VLRQNNTLAS (97 aa)).

This sequence belongs to the lin-9 family. In terms of assembly, component of the DREAM complex.

The protein resides in the nucleus. The protein is Protein lin-9 homolog (lin9) of Danio rerio (Zebrafish).